A 390-amino-acid chain; its full sequence is Putative transposase y4qE (390 aa).

It belongs to the transposase IS1111A/IS1328/IS1533 family.

The chain is Putative transposase y4qE from Sinorhizobium fredii (strain NBRC 101917 / NGR234).